A 668-amino-acid chain; its full sequence is MSDSGVFAFELGDDLATRCGNTLTGVFVPGSRIALSAYRHVTHSSRDEPTENAGQVPVLIYMAQESTLFDEPVLRSVLAEANATFATLQQLGSRATRAEYVNISRAYRSIVRSCLEKLEQAKKSPEVQTDEARLQRLCDAIVVFYAAECLWHLFEILYIQSNQLVVPQLLDWARFHSPHAEDRATDLLLMGEEASESDDYWSIVKSLIMLGEIDVTRAVLSQNRKAGQTSFKAAEQILKSMPVYQEGYALQKFHSQWEFWHVDTERKIQSGLFATEPELEQLIRLVAGDSEQWDAGIKESQDFYEYLPGYLLFTKPTCKPFELKIAAAKWLNRWCLLRPEREQCSMNRMVSQLMDHDLRLFIYDAQKLNDTHWFSTHLIDLIHHCGQLKSYFDQNNIDLPALRHSMIYEYGSYLMTSHNMWQLGIDYLDCCKQEGQAAIELLLPRITLRSERQATKLINLARQRGLISVEREICKVLSKRSYDNERYGNALEWAIRSKDVLLVTAVADFILKHYSKTGCMLCPDTIANVGGRMFASPRLVFLSKYFEFYEFYRTRDFLSASELLVNLLESKITPDYFWPSLLIDSMPLLESKDPKIFAKETVAILHHIETDLVPIIERDVSKYGKHHTETVFKDYRVENVDEIMNLLRLACARNLARALIIENTLPVV.

The protein belongs to the nucleoporin Nup85 family. As to quaternary structure, component of the nuclear pore complex (NPC). Component of the NPC Nup107-160 subcomplex.

The protein localises to the nucleus. The protein resides in the nuclear pore complex. It is found in the nucleus membrane. In terms of biological role, component of the nuclear pore complex (NPC) that seems to be required for NPC assembly and maintenance. Required for nuclear import of phosphorylated Mad via importin msk. Has no role in classical nuclear localization signal (cNLS)-dependent nuclear import via importin-beta. Facilitates the interaction between Nup93 and sec13 with msk. The polypeptide is Nuclear pore complex protein Nup75 (Drosophila melanogaster (Fruit fly)).